A 160-amino-acid chain; its full sequence is Cytochrome b6-f complex subunit 4 (160 aa).

3 helical membrane passes run 36–56 (LLYTFPVVILGTLACVVGLAV), 95–115 (LLGILLQTAIPLGLMLVPFIE), and 127–147 (PIAMAVFLFGTLVTLWMGVAA).

Belongs to the cytochrome b family. PetD subfamily. The 4 large subunits of the cytochrome b6-f complex are cytochrome b6, subunit IV (17 kDa polypeptide, PetD), cytochrome f and the Rieske protein, while the 4 small subunits are PetG, PetL, PetM and PetN. The complex functions as a dimer.

It is found in the cellular thylakoid membrane. In terms of biological role, component of the cytochrome b6-f complex, which mediates electron transfer between photosystem II (PSII) and photosystem I (PSI), cyclic electron flow around PSI, and state transitions. This is Cytochrome b6-f complex subunit 4 from Prochlorothrix hollandica.